The chain runs to 423 residues: Enolase (423 aa).

Gln163 provides a ligand contact to (2R)-2-phosphoglycerate. The Proton donor role is filled by Glu205. Mg(2+)-binding residues include Asp242, Glu285, and Asp312. (2R)-2-phosphoglycerate is bound by residues Lys337, Arg366, Ser367, and Lys388. Catalysis depends on Lys337, which acts as the Proton acceptor.

It belongs to the enolase family. Mg(2+) is required as a cofactor.

The protein resides in the cytoplasm. Its subcellular location is the secreted. The protein localises to the cell surface. The catalysed reaction is (2R)-2-phosphoglycerate = phosphoenolpyruvate + H2O. The protein operates within carbohydrate degradation; glycolysis; pyruvate from D-glyceraldehyde 3-phosphate: step 4/5. In terms of biological role, catalyzes the reversible conversion of 2-phosphoglycerate (2-PG) into phosphoenolpyruvate (PEP). It is essential for the degradation of carbohydrates via glycolysis. This Desulforapulum autotrophicum (strain ATCC 43914 / DSM 3382 / VKM B-1955 / HRM2) (Desulfobacterium autotrophicum) protein is Enolase.